The primary structure comprises 1108 residues: cGMP-inhibited 3',5'-cyclic phosphodiesterase 3B (1108 aa).

Over residues 1-11 (MRKDERERDTP) the composition is skewed to basic and acidic residues. The disordered stretch occupies residues 1–32 (MRKDERERDTPAMRSPPPPPPPATATAASPPE). The interaction with RAPGEF3 stretch occupies residues 1 to 32 (MRKDERERDTPAMRSPPPPPPPATATAASPPE). The span at 14-23 (RSPPPPPPPA) shows a compositional bias: pro residues. A Phosphoserine modification is found at S15. Transmembrane regions (helical) follow at residues 73–93 (AGAR…LLGA), 114–134 (LSLS…CFLT), 144–164 (AGSW…FAAW), 175–195 (AAAA…LTLA), 204–224 (VLVL…LGAL), and 231–251 (LLSC…DHFF). Phosphoserine; by PKB/AKT1 or PKB/AKT2 is present on S279. Residues S280 and S427 each carry the phosphoserine modification. The segment at 405 to 448 (DRKLHKGLSSKPSFPTAQLRRSSGASGLLTSEHHSRWDRSGGKR) is disordered. The segment covering 414–433 (SKPSFPTAQLRRSSGASGLL) has biased composition (polar residues). Positions 421–445 (AQLRRSSGASGLLTSEHHSRWDRSG) are interaction with PIK3R6. Residues 435-445 (SEHHSRWDRSG) show a composition bias toward basic and acidic residues. Residues 633-1070 (PNIDQEVLLD…KIWKEIIEEE (438 aa)) enclose the PDEase domain. H719 serves as the catalytic Proton donor. An AMP-binding site is contributed by H719. Residues H723, H803, D804, and D919 each coordinate Mg(2+). The AMP site is built by D804, D919, and Q970. Acidic residues predominate over residues 999 to 1033 (EEGDDTESDDDDDDDDDDDDDDDEELDSDDEETED). The tract at residues 999–1042 (EEGDDTESDDDDDDDDDDDDDDDEELDSDDEETEDNLNPKPQRR) is disordered.

The protein belongs to the cyclic nucleotide phosphodiesterase family. PDE3 subfamily. Homodimer. Interacts with PIK3CG; regulates PDE3B activity and thereby cAMP levels in cells. Interacts with RAPGEF3 and PIK3R6; form a signaling complex that regulates phosphatidylinositol 3-kinase gamma in angiogenesis. Interacts with ABHD15; this interaction regulates PDE3B's stability and expression and, thereby, impacts the antilipolytic action of insulin. It depends on Mg(2+) as a cofactor. Requires Mn(2+) as cofactor. Phosphorylation at Ser-279 mediates insulin-induced activation of PDE3B. In terms of tissue distribution, abundant in adipose tissues.

The protein localises to the membrane. It carries out the reaction a nucleoside 3',5'-cyclic phosphate + H2O = a nucleoside 5'-phosphate + H(+). It catalyses the reaction 3',5'-cyclic AMP + H2O = AMP + H(+). The enzyme catalyses 3',5'-cyclic GMP + H2O = GMP + H(+). Inhibited by cGMP. Its function is as follows. Cyclic nucleotide phosphodiesterase with a dual-specificity for the second messengers cAMP and cGMP, which are key regulators of many important physiological processes. Regulates angiogenesis by inhibiting the cAMP-dependent guanine nucleotide exchange factor RAPGEF3 and downstream phosphatidylinositol 3-kinase gamma-mediated signaling. Controls cardiac contractility by reducing cAMP concentration in cardiocytes. The polypeptide is cGMP-inhibited 3',5'-cyclic phosphodiesterase 3B (Rattus norvegicus (Rat)).